We begin with the raw amino-acid sequence, 168 residues long: Large ribosomal subunit protein uL5 (168 aa).

It belongs to the universal ribosomal protein uL5 family. As to quaternary structure, part of the 50S ribosomal subunit; contacts the 5S rRNA and probably tRNA. Forms a bridge to the 30S subunit in the 70S ribosome.

In terms of biological role, this is one of the proteins that bind and probably mediate the attachment of the 5S RNA into the large ribosomal subunit, where it forms part of the central protuberance. In the 70S ribosome it contacts protein S13 of the 30S subunit (bridge B1b), connecting the 2 subunits; this bridge is implicated in subunit movement. May contact the P site tRNA; the 5S rRNA and some of its associated proteins might help stabilize positioning of ribosome-bound tRNAs. The protein is Large ribosomal subunit protein uL5 of Methanosphaera stadtmanae (strain ATCC 43021 / DSM 3091 / JCM 11832 / MCB-3).